Consider the following 324-residue polypeptide: Acetyl-coenzyme A carboxylase carboxyl transferase subunit beta (324 aa).

Residues 28 to 297 form the CoA carboxyltransferase N-terminal domain; the sequence is LWCKCPSCNA…AVAPAAAKAP (270 aa). Cys-32, Cys-35, Cys-51, and Cys-54 together coordinate Zn(2+). A C4-type zinc finger spans residues 32 to 54; sequence CPSCNAILYKSEVERNLEVCPKC.

The protein belongs to the AccD/PCCB family. As to quaternary structure, acetyl-CoA carboxylase is a heterohexamer composed of biotin carboxyl carrier protein (AccB), biotin carboxylase (AccC) and two subunits each of ACCase subunit alpha (AccA) and ACCase subunit beta (AccD). It depends on Zn(2+) as a cofactor.

It localises to the cytoplasm. The catalysed reaction is N(6)-carboxybiotinyl-L-lysyl-[protein] + acetyl-CoA = N(6)-biotinyl-L-lysyl-[protein] + malonyl-CoA. The protein operates within lipid metabolism; malonyl-CoA biosynthesis; malonyl-CoA from acetyl-CoA: step 1/1. In terms of biological role, component of the acetyl coenzyme A carboxylase (ACC) complex. Biotin carboxylase (BC) catalyzes the carboxylation of biotin on its carrier protein (BCCP) and then the CO(2) group is transferred by the transcarboxylase to acetyl-CoA to form malonyl-CoA. This Methylococcus capsulatus (strain ATCC 33009 / NCIMB 11132 / Bath) protein is Acetyl-coenzyme A carboxylase carboxyl transferase subunit beta.